A 320-amino-acid chain; its full sequence is Malate dehydrogenase (320 aa).

Residues 10–15 (GAGQIG) and Asp-34 contribute to the NAD(+) site. Substrate contacts are provided by Arg-83 and Arg-89. Residues Asn-96 and 119 to 121 (ITN) contribute to the NAD(+) site. Positions 121 and 152 each coordinate substrate. The active-site Proton acceptor is His-176.

Belongs to the LDH/MDH superfamily. MDH type 3 family.

The enzyme catalyses (S)-malate + NAD(+) = oxaloacetate + NADH + H(+). Its function is as follows. Catalyzes the reversible oxidation of malate to oxaloacetate. This Methylorubrum extorquens (strain CM4 / NCIMB 13688) (Methylobacterium extorquens) protein is Malate dehydrogenase.